The following is an 84-amino-acid chain: Putative membrane protein insertion efficiency factor (84 aa).

Belongs to the UPF0161 family.

It localises to the cell inner membrane. In terms of biological role, could be involved in insertion of integral membrane proteins into the membrane. This Shewanella oneidensis (strain ATCC 700550 / JCM 31522 / CIP 106686 / LMG 19005 / NCIMB 14063 / MR-1) protein is Putative membrane protein insertion efficiency factor.